A 156-amino-acid chain; its full sequence is Ribosome maturation factor RimP (156 aa).

This sequence belongs to the RimP family.

It is found in the cytoplasm. Its function is as follows. Required for maturation of 30S ribosomal subunits. The chain is Ribosome maturation factor RimP from Prochlorococcus marinus (strain NATL2A).